The sequence spans 175 residues: Alkyl hydroperoxide reductase AhpD (175 aa).

Cysteine 131 (proton donor) is an active-site residue. The cysteines at positions 131 and 134 are disulfide-linked. Cysteine 134 serves as the catalytic Cysteine sulfenic acid (-SOH) intermediate.

The protein belongs to the AhpD family.

The catalysed reaction is N(6)-[(R)-dihydrolipoyl]-L-lysyl-[lipoyl-carrier protein] + a hydroperoxide = N(6)-[(R)-lipoyl]-L-lysyl-[lipoyl-carrier protein] + an alcohol + H2O. In terms of biological role, antioxidant protein with alkyl hydroperoxidase activity. Required for the reduction of the AhpC active site cysteine residues and for the regeneration of the AhpC enzyme activity. This chain is Alkyl hydroperoxide reductase AhpD, found in Brucella abortus (strain 2308).